A 771-amino-acid chain; its full sequence is Ribonucleoside-diphosphate reductase large subunit (771 aa).

The region spanning 1–92 is the ATP-cone domain; the sequence is MFVIKRNGYK…VSNLHKETKK (92 aa). Residues 5–6, 11–17, T53, D57, and K88 contribute to the ATP site; these read KR and ENVMFDK. GDP-binding residues include S202 and S217. Residues 226-228, K243, and R256 each bind dTTP; that span reads DSI. N427 serves as a coordination point for GDP. The Proton acceptor role is filled by N427. The Cysteine radical intermediate role is filled by C429. GDP contacts are provided by residues E431 and 603 to 606; that span reads TAST. E431 acts as the Proton acceptor in catalysis.

It belongs to the ribonucleoside diphosphate reductase large chain family. Interacts with RNR2/OPG047 subunit. It depends on Mg(2+) as a cofactor.

It carries out the reaction a 2'-deoxyribonucleoside 5'-diphosphate + [thioredoxin]-disulfide + H2O = a ribonucleoside 5'-diphosphate + [thioredoxin]-dithiol. Ribonucleoside-diphosphate reductase holoenzyme provides the precursors necessary for viral DNA synthesis. Allows virus growth in non-dividing cells. Catalyzes the biosynthesis of deoxyribonucleotides from the corresponding ribonucleotides. This chain is Ribonucleoside-diphosphate reductase large subunit (OPG080), found in Homo sapiens (Human).